Reading from the N-terminus, the 240-residue chain is CD302 antigen (240 aa).

Positions 40-160 (FQDSCYIFLQ…CEVSSVEGTL (121 aa)) constitute a C-type lectin domain. N-linked (GlcNAc...) asparagine glycosylation is present at Asn-117. Cys-136 and Cys-151 are oxidised to a cystine. The chain crosses the membrane as a helical span at residues 177–197 (ILISALVIASTVILTVLGAVI). The Cytoplasmic portion of the chain corresponds to 198–240 (WFLYKRNLDSGFTTVFSTAPQSPFNDDCVLVVAEENEYAVQFD).

It is found in the membrane. The protein localises to the cell projection. Its subcellular location is the filopodium. The protein resides in the cytoplasm. It localises to the cell cortex. In terms of biological role, potential multifunctional C-type lectin receptor that may play roles in endocytosis and phagocytosis as well as in cell adhesion and migration. This is CD302 antigen from Sus scrofa (Pig).